We begin with the raw amino-acid sequence, 698 residues long: Elongation factor G (698 aa).

A tr-type G domain is found at 8–290 (ERYRNIGIAA…AVIEFLPAPN (283 aa)). GTP contacts are provided by residues 17-24 (AHIDAGKT), 88-92 (DTPGH), and 142-145 (NKMD).

The protein belongs to the TRAFAC class translation factor GTPase superfamily. Classic translation factor GTPase family. EF-G/EF-2 subfamily.

It is found in the cytoplasm. In terms of biological role, catalyzes the GTP-dependent ribosomal translocation step during translation elongation. During this step, the ribosome changes from the pre-translocational (PRE) to the post-translocational (POST) state as the newly formed A-site-bound peptidyl-tRNA and P-site-bound deacylated tRNA move to the P and E sites, respectively. Catalyzes the coordinated movement of the two tRNA molecules, the mRNA and conformational changes in the ribosome. This chain is Elongation factor G, found in Halorhodospira halophila (strain DSM 244 / SL1) (Ectothiorhodospira halophila (strain DSM 244 / SL1)).